The following is a 115-amino-acid chain: Large ribosomal subunit protein bL19 (115 aa).

The protein belongs to the bacterial ribosomal protein bL19 family.

This protein is located at the 30S-50S ribosomal subunit interface and may play a role in the structure and function of the aminoacyl-tRNA binding site. The chain is Large ribosomal subunit protein bL19 from Thermosipho melanesiensis (strain DSM 12029 / CIP 104789 / BI429).